A 159-amino-acid chain; its full sequence is UPF0336 protein MAP_4107 (159 aa).

It belongs to the UPF0336 family.

The protein is UPF0336 protein MAP_4107 of Mycolicibacterium paratuberculosis (strain ATCC BAA-968 / K-10) (Mycobacterium paratuberculosis).